Here is a 629-residue protein sequence, read N- to C-terminus: Iron-regulated surface determinant protein B (629 aa).

The first 40 residues, 1-40 (MNKQQKEFKSFYSIRKSSLGVASVAISTLLLLMSNGEAQA), serve as a signal peptide directing secretion. Residues 12 to 23 (YSIRKSSLGVAS) carry the YSIRK-G/S signaling motif motif. Residues 38-104 (AQAAEETGGT…VKPAAKSDNN (67 aa)) are disordered. A compositionally biased stretch (basic and acidic residues) spans 83–99 (KEVEAPTSETKEVKPAA). NEAT domains follow at residues 128–253 (SAPN…KFKT) and 325–442 (KMTD…TKAN). Residues Met-346 and Tyr-424 each coordinate heme. Composition is skewed to basic and acidic residues over residues 443-460 (ADKT…KKET) and 473-518 (VEKE…KGEV). Residues 443-605 (ADKTNKKEQQ…QTGEESNKDM (163 aa)) are disordered. The segment covering 519-532 (ESSSTTPTKVVSTT) has biased composition (low complexity). Polar residues-rich tracts occupy residues 533–556 (QNAA…SAGS) and 569–599 (NIKN…QTGE). An LPXTG sorting signal motif is present at residues 594-598 (LPQTG). At Thr-597 the chain carries Pentaglycyl murein peptidoglycan amidated threonine. Residues 598–629 (GEESNKDMTLPLMSLLALSSIIAFVLPRKRKN) constitute a propeptide, removed by sortase A.

It belongs to the IsdB family. In terms of assembly, interacts with host HBA; this interaction allows heme extraction as iron source. Interacts with IsdA.

The protein resides in the secreted. The protein localises to the cell wall. Cell wall-anchored surface receptor that extracts heme from oxidized metHb to enable growth on hemoglobin as a sole iron source. Rapidly extracts heme from hemoglobin and transfers it to IsdA or IsdC, which then relays it to the membrane transporter/IsdEF for internalization. Also promotes resistance to hydrogen peroxide and killing by neutrophils. This is Iron-regulated surface determinant protein B (isdB) from Staphylococcus aureus (strain bovine RF122 / ET3-1).